A 249-amino-acid polypeptide reads, in one-letter code: Testis-expressed protein 101 (249 aa).

The first 25 residues, 1-25, serve as a signal peptide directing secretion; that stretch reads MGTPRIQHLLILLVLGASLLTSGLE. Residues Asn45 and Asn159 are each glycosylated (N-linked (GlcNAc...) asparagine). A UPAR/Ly6 domain is found at 140-211; sequence CPTCVALGTC…PMFVREACPH (72 aa). A lipid anchor (GPI-anchor amidated asparagine) is attached at Asn222. Residues 223 to 249 constitute a propeptide, removed in mature form; sequence GATCLPIPVWGLQLLLPLLLPSFIHFS.

As to quaternary structure, interacts with VAMP3. Interacts with LY6K. Interacts with DPEP3; co-localized on the cell surface of spermatocytes, spermatids, and testicular spermatozoa, co-localized only in cytoplasmic droplets of caput and corpus epididymal sperm. Interacts with ADAM5. Post-translationally, N-glycosylated; by high mannose and/or biantennary complex and/or certain types of hybrid oligosaccharides; possesses different oligosaccharides chains according to its subcellular localization in the testis. Sheds from membrane raft by ACE and released from the cell surface of epididymal sperm while it passes through the caput epididymis leading to disappearance of TEX101 on spermatozoa; is essential to produce fertile spermatozoa. In terms of tissue distribution, detected in testis and spermatogonia. Not detected in spermatocytes. Detected in blood leukocytes.

It localises to the cell membrane. The protein resides in the membrane raft. The protein localises to the cytoplasmic vesicle. Its subcellular location is the secretory vesicle. It is found in the acrosome. It localises to the secreted. Plays a role in fertilization by controlling binding of sperm to zona pellucida and migration of spermatozoa into the oviduct. May play a role in signal transduction and promote protein tyrosine phosphorylation. This Homo sapiens (Human) protein is Testis-expressed protein 101.